The sequence spans 1119 residues: Putative transcription factor SEF1 (1119 aa).

Disordered stretches follow at residues 1-70 and 86-105; these read MGDP…TQSR and QNGE…SKGK. Over residues 47–70 the composition is skewed to polar residues; that stretch reads LHTQQSYYGNGTDGASESALTQSR. The zn(2)-C6 fungal-type DNA-binding region spans 118–148; that stretch reads CTHCRQHKIKCNASEKFPAPCSRCERMGLHC. Disordered stretches follow at residues 236–290, 306–335, 894–913, 926–962, and 994–1018; these read QLLQ…PANT, SQQI…SSKQ, ASSS…TDTN, KKSS…AHNT, and SADS…PDTN. The segment covering 243 to 260 has biased composition (low complexity); the sequence is TTTTNPTTSSNSKVVTPT. Positions 261–288 are enriched in polar residues; it reads GSDHSPASHNGGSLSSGKPQLLNDSVPA. The segment covering 306–322 has biased composition (low complexity); the sequence is SQQISSSSPQNSSPTTT. 3 stretches are compositionally biased toward polar residues: residues 323–335, 902–913, and 931–942; these read GHSP…SSKQ, RLNADNPTTDTN, and SSDTPTNKPKFN. The span at 943–954 shows a compositional bias: low complexity; it reads STSSIPTATPTS.

The protein localises to the nucleus. Functionally, putative transcription factor. Suppresses the lethal phenotype of RPM2 deletion. In Kluyveromyces lactis (strain ATCC 8585 / CBS 2359 / DSM 70799 / NBRC 1267 / NRRL Y-1140 / WM37) (Yeast), this protein is Putative transcription factor SEF1 (SEF1).